Reading from the N-terminus, the 346-residue chain is Anthocyanidin 3-O-glucosyltransferase 2 (346 aa).

7 residues coordinate UDP-alpha-D-glucose: alanine 221, glutamine 223, histidine 238, tryptophan 241, asparagine 242, serine 243, and glutamate 246. Residue alanine 261 participates in an anthocyanidin binding. Residues glutamate 262 and glutamine 263 each contribute to the UDP-alpha-D-glucose site.

The protein belongs to the UDP-glycosyltransferase family. Expressed in cotyledons, roots and leaves.

The enzyme catalyses an anthocyanidin + UDP-alpha-D-glucose + H(+) = an anthocyanidin 3-O-beta-D-glucoside + UDP. It functions in the pathway pigment biosynthesis; anthocyanin biosynthesis. In the presence of other necessary color factors, this glycosylation reaction allows the accumulation of anthocyanin pigments. The protein is Anthocyanidin 3-O-glucosyltransferase 2 (GT2) of Manihot esculenta (Cassava).